We begin with the raw amino-acid sequence, 987 residues long: Ephrin type-B receptor 4 (987 aa).

An N-terminal signal peptide occupies residues 1–15 (MELRALLCWASLATA). Residues 16–539 (LEETLLNTKL…ESESWREQLA (524 aa)) lie on the Extracellular side of the membrane. Residues 17–202 (EETLLNTKLE…FYKKCSWLIT (186 aa)) enclose the Eph LBD domain. 2 cysteine pairs are disulfide-bonded: cysteine 61/cysteine 184 and cysteine 97/cysteine 107. Asparagine 203, asparagine 335, and asparagine 426 each carry an N-linked (GlcNAc...) asparagine glycan. Fibronectin type-III domains follow at residues 323-432 (PPSA…TDRE) and 436-529 (AVSD…TQLD). The chain crosses the membrane as a helical span at residues 540-560 (LIAGTAVVGVVLVLVVVIIAV). The Cytoplasmic portion of the chain corresponds to 561–987 (LCLRKQSNGR…GGTGGPAQQF (427 aa)). The 285-residue stretch at 615 to 899 (VKIEEVIGAG…ENGGASHPLL (285 aa)) folds into the Protein kinase domain. ATP is bound by residues 621 to 629 (IGAGEFGEV) and lysine 647. Residue aspartate 740 is the Proton acceptor of the active site. A phosphoserine mark is found at serine 769, serine 770, serine 911, and serine 943. The 65-residue stretch at 907 to 971 (SAFGSVGEWL…LASVQHMKSQ (65 aa)) folds into the SAM domain. A disordered region spans residues 965–987 (VQHMKSQAKPGAPGGTGGPAQQF). Residues 976–987 (APGGTGGPAQQF) show a composition bias toward gly residues. A PDZ-binding motif is present at residues 985 to 987 (QQF).

The protein belongs to the protein kinase superfamily. Tyr protein kinase family. Ephrin receptor subfamily. In terms of assembly, heterotetramer upon binding of the ligand. The heterotetramer is composed of an ephrin dimer and a receptor dimer. Oligomerization is probably required to induce biological responses. Interacts with RASA1; the interaction depends on EPHB4 tyrosine-phosphorylation. Post-translationally, phosphorylated; autophosphorylation is stimulated by EFNB2. As to expression, expressed in various organ systems, including lung, liver, kidney, intestine, muscle and heart. Expressed in myogenic progenitor cells.

The protein resides in the cell membrane. The enzyme catalyses L-tyrosyl-[protein] + ATP = O-phospho-L-tyrosyl-[protein] + ADP + H(+). Functionally, receptor tyrosine kinase which binds promiscuously transmembrane ephrin-B family ligands residing on adjacent cells, leading to contact-dependent bidirectional signaling into neighboring cells. The signaling pathway downstream of the receptor is referred to as forward signaling while the signaling pathway downstream of the ephrin ligand is referred to as reverse signaling. Together with its cognate ligand/functional ligand EFNB2 it is involved in the regulation of cell adhesion and migration, and plays a central role in heart morphogenesis, angiogenesis and blood vessel remodeling and permeability. EPHB4-mediated forward signaling controls cellular repulsion and segregation from EFNB2-expressing cells. The polypeptide is Ephrin type-B receptor 4 (Ephb4) (Mus musculus (Mouse)).